A 361-amino-acid polypeptide reads, in one-letter code: Probable purine permease 5 (361 aa).

The next 9 membrane-spanning stretches (helical) occupy residues 37-57 (WILLFFSGAAMLIAFPASSLL), 70-90 (WIISWVAVAGWPITCLILLPT), 105-125 (LVLSYVVLGFLSAADNLMYAY), 134-154 (TSSLLASSSLAFSALFGYLIV), 158-178 (LNASVINSIVVITGAMAIIAL), 193-213 (YFAGFFWDIMGSALHGLIFAL), 235-255 (VMVSLTAFAFTTIGMVVSNDF), 285-305 (LGVLGATAVLFLASTVMAGVL), and 315-335 (VAAVILMHDPMSGFKILSLVL). The EamA domain occupies 75 to 178 (VAVAGWPITC…ITGAMAIIAL (104 aa)).

This sequence belongs to the purine permeases (TC 2.A.7.14) family.

It localises to the membrane. The polypeptide is Probable purine permease 5 (PUP5) (Arabidopsis thaliana (Mouse-ear cress)).